A 347-amino-acid chain; its full sequence is tRNA N6-adenosine threonylcarbamoyltransferase (347 aa).

Residues H111 and H115 each coordinate Fe cation. Residues 133 to 137 (LASGG), D166, G179, and N278 each bind substrate. D306 provides a ligand contact to Fe cation.

It belongs to the KAE1 / TsaD family. The cofactor is Fe(2+).

Its subcellular location is the cytoplasm. It carries out the reaction L-threonylcarbamoyladenylate + adenosine(37) in tRNA = N(6)-L-threonylcarbamoyladenosine(37) in tRNA + AMP + H(+). Functionally, required for the formation of a threonylcarbamoyl group on adenosine at position 37 (t(6)A37) in tRNAs that read codons beginning with adenine. Is involved in the transfer of the threonylcarbamoyl moiety of threonylcarbamoyl-AMP (TC-AMP) to the N6 group of A37, together with TsaE and TsaB. TsaD likely plays a direct catalytic role in this reaction. This Paramagnetospirillum magneticum (strain ATCC 700264 / AMB-1) (Magnetospirillum magneticum) protein is tRNA N6-adenosine threonylcarbamoyltransferase.